A 666-amino-acid chain; its full sequence is NAD(P)H-quinone oxidoreductase subunit 5, organellar chromatophore 1 (666 aa).

The next 15 helical transmembrane spans lie at 8 to 28 (LVWLIPILPFIGAFLVGFGLI), 41 to 61 (AALLLISSVGISAVLSFMVLA), 90 to 110 (VDPIGATMLALVSTVAILVMV), 121 to 141 (SYVRFFTYLGLFTSSMLALIL), 145 to 165 (LLEIYVFWELVGMCSYLLIGF), 190 to 210 (FLLGILGLFWATNSFDFQIVA), 220 to 240 (GSIPHWAAIALCLLLFMGPMA), 259 to 279 (TPISALIHAATMVAAGVFLVA), 293 to 313 (IIVAVIGTITCFLGASIALIQ), 328 to 348 (LGYMMLAMGCGAPVAGMFHLI), 396 to 416 (GITFFIGCVAISGIPPLAGFW), 428 to 448 (SYPLLWGVGLFTAGLTAFYMF), 497 to 517 (TLPLVILSVPSVLIGFLGSPW), 542 to 562 (FLPLAIASVMISTCGIVIATI), and 643 to 663 (GRPQFYALIIFGGVISLIVIF).

Belongs to the complex I subunit 5 family. NDH is composed of at least 16 different subunits, 5 of which are encoded in the nucleus.

It is found in the plastid. The protein localises to the organellar chromatophore thylakoid membrane. The catalysed reaction is a plastoquinone + NADH + (n+1) H(+)(in) = a plastoquinol + NAD(+) + n H(+)(out). It catalyses the reaction a plastoquinone + NADPH + (n+1) H(+)(in) = a plastoquinol + NADP(+) + n H(+)(out). Functionally, NDH shuttles electrons from NAD(P)H:plastoquinone, via FMN and iron-sulfur (Fe-S) centers, to quinones in the photosynthetic chain and possibly in a chloroplast respiratory chain. The immediate electron acceptor for the enzyme in this species is believed to be plastoquinone. Couples the redox reaction to proton translocation, and thus conserves the redox energy in a proton gradient. This chain is NAD(P)H-quinone oxidoreductase subunit 5, organellar chromatophore 1 (ndhF1), found in Paulinella chromatophora.